A 216-amino-acid chain; its full sequence is Outer-membrane lipoprotein LolB (216 aa).

A signal peptide spans 1-21 (MLIFKICFYRLLPLSVLLLAA). The N-palmitoyl cysteine moiety is linked to residue Cys22. The S-diacylglycerol cysteine moiety is linked to residue Cys22.

The protein belongs to the LolB family. In terms of assembly, monomer.

It is found in the cell outer membrane. Its function is as follows. Plays a critical role in the incorporation of lipoproteins in the outer membrane after they are released by the LolA protein. This Hamiltonella defensa subsp. Acyrthosiphon pisum (strain 5AT) protein is Outer-membrane lipoprotein LolB.